Here is a 54-residue protein sequence, read N- to C-terminus: Putative ATP synthase subunit epsilon, mitochondrial (54 aa).

This sequence belongs to the eukaryotic ATPase epsilon family. F-type ATPases have 2 components, CF(1) - the catalytic core - and CF(0) - the membrane proton channel. CF(1) has five subunits: alpha(3), beta(3), gamma(1), delta(1), epsilon(1). CF(0) seems to have nine subunits: a, b, c, d, e, f, g, F6 and 8 (or A6L).

The protein localises to the mitochondrion. It is found in the mitochondrion inner membrane. Its function is as follows. Mitochondrial membrane ATP synthase (F(1)F(0) ATP synthase or Complex V) produces ATP from ADP in the presence of a proton gradient across the membrane which is generated by electron transport complexes of the respiratory chain. F-type ATPases consist of two structural domains, F(1) - containing the extramembraneous catalytic core, and F(0) - containing the membrane proton channel, linked together by a central stalk and a peripheral stalk. During catalysis, ATP synthesis in the catalytic domain of F(1) is coupled via a rotary mechanism of the central stalk subunits to proton translocation. Part of the complex F(1) domain and of the central stalk which is part of the complex rotary element. Rotation of the central stalk against the surrounding alpha(3)beta(3) subunits leads to hydrolysis of ATP in three separate catalytic sites on the beta subunits. The sequence is that of Putative ATP synthase subunit epsilon, mitochondrial from Caenorhabditis elegans.